The following is a 767-amino-acid chain: Glucoamylase S1 (767 aa).

The N-terminal stretch at 1–21 (MQRPFLLAYLVLSLLFNSALG) is a signal peptide. Disordered stretches follow at residues 29-83 (RGSS…ETTI) and 125-149 (TTTV…PTTP). Positions 30 to 48 (GSSSSNITSSGPSSTPFSS) are enriched in low complexity. N-linked (GlcNAc...) asparagine glycosylation occurs at Asn-35. The segment covering 49–66 (ATESFSTGTTVTPSSSKY) has biased composition (polar residues). 2 stretches are compositionally biased toward low complexity: residues 71–83 (TETS…ETTI) and 131–149 (STSP…PTTP). N-linked (GlcNAc...) asparagine glycans are attached at residues Asn-308, Asn-322, Asn-414, Asn-423, and Asn-434. The tract at residues 348 to 691 (VSIERIFENI…ASTTLYQLIY (344 aa)) is h subunit. Trp-455 serves as a coordination point for substrate. Asn-513 is a glycosylation site (N-linked (GlcNAc...) asparagine). Asp-518 functions as the Proton acceptor in the catalytic mechanism. The active-site Proton donor is the Glu-521. 5 N-linked (GlcNAc...) asparagine glycosylation sites follow: Asn-546, Asn-645, Asn-650, Asn-720, and Asn-741. Residues 692–767 (RHISEQHDLV…LKATWEQTGN (76 aa)) form a y subunit region.

The protein belongs to the glycosyl hydrolase 15 family.

The catalysed reaction is Hydrolysis of terminal (1-&gt;4)-linked alpha-D-glucose residues successively from non-reducing ends of the chains with release of beta-D-glucose.. The sequence is that of Glucoamylase S1 (STA1) from Saccharomyces cerevisiae (Baker's yeast).